A 92-amino-acid chain; its full sequence is UPF0250 protein Pmen_3793 (92 aa).

Belongs to the UPF0250 family.

In Ectopseudomonas mendocina (strain ymp) (Pseudomonas mendocina), this protein is UPF0250 protein Pmen_3793.